The chain runs to 544 residues: MPKQLYFNEEARRALKRGVDLVADAVKTTLGPRGRNVAIDKKFGSPTVTHDGVTVAKEIELKDPFENMGAQLLKEAATKTNDVAGDGTTTATVLAQAIVTEGLKVVAAGANAMLLKRGLDRGAEALVAAIKASAVPVRDRADIAHVATNSAADSEIGELIAEVMEKVGKDGVITVEESKGVTFEKEYTEGMQFDRGYISGYMVTNVERQEAELDEPYILITDKKISSIQEILPVLEKVLQVTKNFVIIAEDVDGEALATLVVNKLRGTINALAVKAPGFGDRRKAMLQDIAILTGGTVISEEIGRKLDSATIEDLGRARKVIATKDDTTIIEGRGDEAAIRARIEQIRAQIATTTSDFDREKLQERLAKLAGGVAVIKVGAATEPELKEKKHRVEDALSATRAAVEEGIVPGGGVALINAIPALDNVQVAHEDEKVGLQILRRALEEPLRILARNAGEDGSVIIANVRRLQEEKGDKTIGYNVLTGQYGSMIEQGIIDPVKVTRSAVQNAVSIAGMILTTEALITDIPEDKPAATPGAGGGMDF.

Residues 29–32, 86–90, Gly413, 482–484, and Asp498 contribute to the ATP site; these read TLGP, DGTTT, and NVL.

The protein belongs to the chaperonin (HSP60) family. Forms a cylinder of 14 subunits composed of two heptameric rings stacked back-to-back. Interacts with the co-chaperonin GroES.

It is found in the cytoplasm. It catalyses the reaction ATP + H2O + a folded polypeptide = ADP + phosphate + an unfolded polypeptide.. Functionally, together with its co-chaperonin GroES, plays an essential role in assisting protein folding. The GroEL-GroES system forms a nano-cage that allows encapsulation of the non-native substrate proteins and provides a physical environment optimized to promote and accelerate protein folding. In Chloroflexus aurantiacus (strain ATCC 29366 / DSM 635 / J-10-fl), this protein is Chaperonin GroEL 1.